The following is a 310-amino-acid chain: Deoxyribonuclease gamma (310 aa).

A signal peptide spans 1–25 (MSLHPASPRLASLLLFILALHDTLA). Positions 40-56 (KKENHEAMDIIVKIIKR) match the Bipartite nuclear localization signal motif. Active-site residues include glutamate 105 and histidine 160. Cysteine 199 and cysteine 236 form a disulfide bridge. The not required for free DNA-nuclease activity but required for activity towards liposome-coated DNA stretch occupies residues 289 to 310 (SRAFTNNRKSVSLKKRKKGNRS). Residues 301–307 (LKKRKKG) carry the Nuclear localization signal motif.

This sequence belongs to the DNase I family. Ca(2+) is required as a cofactor. Requires Mg(2+) as cofactor. Post-translationally, poly-ADP-ribosylated by PARP1. ADP-ribosylation negatively regulates enzymatic activity during apoptosis. In terms of tissue distribution, expressed at high levels in liver, spleen and testes. Expressed at lower levels in heart, lungs, skeletal muscle and kidney. Not expressed in brain. Predominantly expressed in macrophages; at protein level. Secreted by mononuclear phagocytes.

The protein localises to the nucleus. It is found in the endoplasmic reticulum. It localises to the secreted. Its activity is regulated as follows. Inhibited by zinc. Inhibited by heparin and proteolysis by plasmin. Functionally, has DNA hydrolytic activity. Is capable of both single- and double-stranded DNA cleavage, producing DNA fragments with 3'-OH ends. Can cleave chromatin to nucleosomal units and cleaves nucleosomal and liposome-coated DNA. Acts in internucleosomal DNA fragmentation (INDF) during apoptosis and necrosis. The role in apoptosis includes myogenic and neuronal differentiation, and BCR-mediated clonal deletion of self-reactive B cells. Is active on chromatin in apoptotic cell-derived membrane-coated microparticles and thus suppresses anti-DNA autoimmunity. Together with DNASE1, plays a key role in degrading neutrophil extracellular traps (NETs). NETs are mainly composed of DNA fibers and are released by neutrophils to bind pathogens during inflammation. Degradation of intravascular NETs by DNASE1 and DNASE1L3 is required to prevent formation of clots that obstruct blood vessels and cause organ damage following inflammation. The chain is Deoxyribonuclease gamma from Mus musculus (Mouse).